The chain runs to 396 residues: Mevalonate kinase (396 aa).

Residues K13, N55, S135, and 140–146 (GAGLGSS) contribute to the ATP site. The active-site Proton donor is the S146. Mg(2+)-binding residues include S146 and E193. Catalysis depends on D204, which acts as the Proton acceptor.

The protein belongs to the GHMP kinase family. Mevalonate kinase subfamily. As to quaternary structure, homodimer. Requires Mg(2+) as cofactor.

The protein resides in the cytoplasm. It localises to the peroxisome. It carries out the reaction (R)-mevalonate + ATP = (R)-5-phosphomevalonate + ADP + H(+). The protein operates within isoprenoid biosynthesis; isopentenyl diphosphate biosynthesis via mevalonate pathway; isopentenyl diphosphate from (R)-mevalonate: step 1/3. With respect to regulation, farnesyl pyrophosphate and geranyl pyrophosphate inhibit mevalonate kinase activity by binding competitively at the ATP-binding sites. Its function is as follows. Catalyzes the phosphorylation of mevalonate to mevalonate 5-phosphate, a key step in isoprenoid and cholesterol biosynthesis. This Homo sapiens (Human) protein is Mevalonate kinase.